Reading from the N-terminus, the 267-residue chain is Type III pantothenate kinase (267 aa).

Residue 6-13 (DSGNSRLK) coordinates ATP. Substrate contacts are provided by residues Tyr96 and 103-106 (GADR). Catalysis depends on Asp105, which acts as the Proton acceptor. Residue Thr131 participates in ATP binding. Thr181 serves as a coordination point for substrate.

It belongs to the type III pantothenate kinase family. In terms of assembly, homodimer. It depends on NH4(+) as a cofactor. The cofactor is K(+).

It localises to the cytoplasm. The enzyme catalyses (R)-pantothenate + ATP = (R)-4'-phosphopantothenate + ADP + H(+). It functions in the pathway cofactor biosynthesis; coenzyme A biosynthesis; CoA from (R)-pantothenate: step 1/5. Catalyzes the phosphorylation of pantothenate (Pan), the first step in CoA biosynthesis. The polypeptide is Type III pantothenate kinase (Bordetella bronchiseptica (strain ATCC BAA-588 / NCTC 13252 / RB50) (Alcaligenes bronchisepticus)).